Here is a 696-residue protein sequence, read N- to C-terminus: SEC14 domain and spectrin repeat-containing protein 1 (696 aa).

Positions 1–153 constitute a CRAL-TRIO domain; sequence MDATVILPIL…EFGGSLTYDH (153 aa). Spectrin repeat units lie at residues 272-378, 381-494, and 500-602; these read TQLD…NLLQ, LDFH…LKML, and FKCE…HRLE.

It belongs to the SOLO family.

Its function is as follows. May act as the primary docking protein directing membrane turnover and assembly of the transient receptor potential channels trpc4 and trpc5. Binds phospholipids. In Xenopus tropicalis (Western clawed frog), this protein is SEC14 domain and spectrin repeat-containing protein 1 (sestd1).